The primary structure comprises 355 residues: Peptide chain release factor 1 (355 aa).

Gln-233 is modified (N5-methylglutamine).

It belongs to the prokaryotic/mitochondrial release factor family. In terms of processing, methylated by PrmC. Methylation increases the termination efficiency of RF1.

It localises to the cytoplasm. Peptide chain release factor 1 directs the termination of translation in response to the peptide chain termination codons UAG and UAA. This chain is Peptide chain release factor 1, found in Dehalococcoides mccartyi (strain ATCC BAA-2100 / JCM 16839 / KCTC 5957 / BAV1).